The sequence spans 413 residues: Corticotropin-releasing factor receptor 2 (413 aa).

Positions 1 to 22 form a signal peptide, not cleaved; the sequence is MDSTIFEIIIDEFDANCSLLDA. The Extracellular segment spans residues 1–110; the sequence is MDSTIFEIII…CVPILDNKRK (110 aa). N-linked (GlcNAc...) asparagine glycosylation occurs at Asn-16. Disulfide bonds link Cys-17-Cys-53, Cys-43-Cys-86, and Cys-67-Cys-101. Asn-77, Asn-89, and Asn-97 each carry an N-linked (GlcNAc...) asparagine glycan. The helical transmembrane segment at 111–141 threads the bilayer; sequence YALHYKIALIINYLGHCISILALVIAFLLFL. Topologically, residues 142-148 are cytoplasmic; the sequence is CLRSIRC. The helical transmembrane segment at 149 to 173 threads the bilayer; sequence LRNIIHWNLITTFILRNIMWFLLQM. The Extracellular portion of the chain corresponds to 174 to 187; sequence IDHNIHESNEVWCR. Cys-186 and Cys-256 are oxidised to a cystine. Residues 188 to 216 form a helical membrane-spanning segment; the sequence is CITTIYNYFVVTNFFWMFVEGCYLHTAIV. Residues 217–223 lie on the Cytoplasmic side of the membrane; that stretch reads MTYSTDK. A helical membrane pass occupies residues 224 to 251; that stretch reads LRKWVFLFIGWCIPSPIIVTWAICKLFY. Over 252 to 267 the chain is Extracellular; the sequence is ENEQCWIGKEPGKYID. A helical transmembrane segment spans residues 268–293; sequence YIYQGRVILVLLINFVFLFNIVRILM. The Cytoplasmic portion of the chain corresponds to 294–304; the sequence is TKLRASTTSET. The helical transmembrane segment at 305 to 329 threads the bilayer; the sequence is IQYRKAVKATLVLLPLLGITYMLFF. At 330–336 the chain is on the extracellular side; it reads VNPGEDD. A helical membrane pass occupies residues 337-366; it reads VSQIVFIYFNSFLQSFQGFFVSVFYCFLNG. At 367 to 413 the chain is on the cytoplasmic side; that stretch reads EVRSAARKRWHRWQDHHSLRVRVARAMSIPTSPTRISFHSIKQTAAV.

It belongs to the G-protein coupled receptor 2 family. In terms of processing, a N-glycosylation site within the signal peptide impedes its proper cleavage and function.

Its subcellular location is the cell membrane. Its function is as follows. G-protein coupled receptor for CRH (corticotropin-releasing factor), UCN (urocortin), UCN2 and UCN3. Has high affinity for UCN. Ligand binding causes a conformation change that triggers signaling via guanine nucleotide-binding proteins (G proteins) and down-stream effectors, such as adenylate cyclase. Promotes the activation of adenylate cyclase, leading to increased intracellular cAMP levels. This chain is Corticotropin-releasing factor receptor 2 (crhr2), found in Xenopus laevis (African clawed frog).